Reading from the N-terminus, the 468-residue chain is ATP synthase subunit beta (468 aa).

Residue 155–162 coordinates ATP; that stretch reads GGAGVGKT.

Belongs to the ATPase alpha/beta chains family. In terms of assembly, F-type ATPases have 2 components, CF(1) - the catalytic core - and CF(0) - the membrane proton channel. CF(1) has five subunits: alpha(3), beta(3), gamma(1), delta(1), epsilon(1). CF(0) has three main subunits: a(1), b(2) and c(9-12). The alpha and beta chains form an alternating ring which encloses part of the gamma chain. CF(1) is attached to CF(0) by a central stalk formed by the gamma and epsilon chains, while a peripheral stalk is formed by the delta and b chains.

It localises to the cell inner membrane. The enzyme catalyses ATP + H2O + 4 H(+)(in) = ADP + phosphate + 5 H(+)(out). Produces ATP from ADP in the presence of a proton gradient across the membrane. The catalytic sites are hosted primarily by the beta subunits. This is ATP synthase subunit beta from Leptospira biflexa serovar Patoc (strain Patoc 1 / ATCC 23582 / Paris).